The primary structure comprises 40 residues: Chaperonin HSP60, mitochondrial (40 aa).

The protein belongs to the chaperonin (HSP60) family.

The protein resides in the mitochondrion. Implicated in mitochondrial protein import and macromolecular assembly. May facilitate the correct folding of imported proteins. May also prevent misfolding and promote the refolding and proper assembly of unfolded polypeptides generated under stress conditions in the mitochondrial matrix. In Solanum tuberosum (Potato), this protein is Chaperonin HSP60, mitochondrial.